We begin with the raw amino-acid sequence, 725 residues long: Catalase-peroxidase (725 aa).

A cross-link (tryptophyl-tyrosyl-methioninium (Trp-Tyr) (with M-253)) is located at residues 99–227; it reads WHAAGTYRIA…LAAVMMGLIY (129 aa). Histidine 100 serves as the catalytic Proton acceptor. Residues 227 to 253 constitute a cross-link (tryptophyl-tyrosyl-methioninium (Tyr-Met) (with W-99)); it reads YVNPEGVDGNPDPLKTAHDIRITFSRM. Histidine 268 lines the heme b pocket.

Belongs to the peroxidase family. Peroxidase/catalase subfamily. Homodimer or homotetramer. It depends on heme b as a cofactor. Formation of the three residue Trp-Tyr-Met cross-link is important for the catalase, but not the peroxidase activity of the enzyme.

The enzyme catalyses H2O2 + AH2 = A + 2 H2O. The catalysed reaction is 2 H2O2 = O2 + 2 H2O. Bifunctional enzyme with both catalase and broad-spectrum peroxidase activity. The chain is Catalase-peroxidase from Picosynechococcus sp. (strain ATCC 27264 / PCC 7002 / PR-6) (Agmenellum quadruplicatum).